The primary structure comprises 506 residues: bZIP transcription factor TGA10 (506 aa).

Disordered regions lie at residues 22–50 (VSYM…HQHH) and 113–218 (PSSI…KTLR). Polar residues-rich tracts occupy residues 25-45 (MDSS…SFGG), 113-124 (PSSIQEQRQNSG), 142-152 (PSTTNKMNTGL), and 160-180 (SKRS…NDAP). Residues 207 to 216 (DAPKTPDPKT) are compositionally biased toward basic and acidic residues. The region spanning 213 to 257 (DPKTLRRLAQNREAARKSRLRKKAYVQQLESSRIRLTQLEQELQR) is the bZIP domain. Positions 215–235 (KTLRRLAQNREAARKSRLRKK) are basic motif. The Nuclear localization signal motif lies at 217 to 224 (LRRLAQNR). The interval 241–255 (LESSRIRLTQLEQEL) is leucine-zipper. Residues 288-502 (AAVFDMEYAR…RALSSLWHAR (215 aa)) form the DOG1 domain.

The protein belongs to the bZIP family. Binds DNA as a dimer. Interacts with TGA2.2. As to expression, specifically expressed in roots.

The protein resides in the nucleus. Transcription activator that binds to as1-like elements (5'-TGACGTAAgggaTGACGCA-3') in promoters of target genes. Regulates transcription in response to plant signaling molecules salicylic acid (SA), methyl jasmonate (MJ) and auxin (2,4D) only in leaves. Prevents lateral branching and may repress defense signaling. The protein is bZIP transcription factor TGA10 of Nicotiana tabacum (Common tobacco).